We begin with the raw amino-acid sequence, 684 residues long: Endo-1,4-beta-xylanase A (684 aa).

The first 34 residues, methionine 1–alanine 34, serve as a signal peptide directing secretion. 2 CBM-cenC domains span residues lysine 40–leucine 190 and alanine 193–glutamate 342. A GH10 domain is found at aspartate 350–proline 678. Glutamate 490 functions as the Proton donor in the catalytic mechanism. Catalysis depends on glutamate 598, which acts as the Nucleophile.

This sequence belongs to the glycosyl hydrolase 10 (cellulase F) family.

It catalyses the reaction Endohydrolysis of (1-&gt;4)-beta-D-xylosidic linkages in xylans.. The protein operates within glycan degradation; xylan degradation. The sequence is that of Endo-1,4-beta-xylanase A (xynA) from Caldicellulosiruptor sp. (strain Rt8B.4).